Here is a 364-residue protein sequence, read N- to C-terminus: Coproporphyrin III ferrochelatase (364 aa).

Positions 29 and 118 each coordinate Fe-coproporphyrin III. The Fe(2+) site is built by histidine 169 and glutamate 250.

It belongs to the ferrochelatase family.

The protein resides in the cytoplasm. It carries out the reaction Fe-coproporphyrin III + 2 H(+) = coproporphyrin III + Fe(2+). Its pathway is porphyrin-containing compound metabolism; protoheme biosynthesis. In terms of biological role, involved in coproporphyrin-dependent heme b biosynthesis. Catalyzes the insertion of ferrous iron into coproporphyrin III to form Fe-coproporphyrin III. This Streptococcus pneumoniae (strain ATCC 700669 / Spain 23F-1) protein is Coproporphyrin III ferrochelatase.